The sequence spans 597 residues: CTP synthase (597 aa).

The interval 1-272 is amidoligase domain; it reads MARPKNVKYV…DMRVLKKLGL (272 aa). Residue serine 18 participates in CTP binding. Serine 18 serves as a coordination point for UTP. An ATP-binding site is contributed by 19-24; sequence SLGKGI. Residue tyrosine 59 coordinates L-glutamine. ATP is bound at residue aspartate 76. Mg(2+) is bound by residues aspartate 76 and glutamate 146. Residues 153–155, 193–198, and lysine 229 contribute to the CTP site; these read DIE and KTKPTQ. UTP is bound by residues 193–198 and lysine 229; that span reads KTKPTQ. The 245-residue stretch at 299–543 folds into the Glutamine amidotransferase type-1 domain; sequence NVAICGKYTE…VGAAKAYADG (245 aa). Glycine 363 contributes to the L-glutamine binding site. Cysteine 390 serves as the catalytic Nucleophile; for glutamine hydrolysis. Residues 391-394, glutamate 414, and arginine 471 each bind L-glutamine; that span reads LGMQ. Catalysis depends on residues histidine 516 and glutamate 518.

Belongs to the CTP synthase family. Homotetramer.

It carries out the reaction UTP + L-glutamine + ATP + H2O = CTP + L-glutamate + ADP + phosphate + 2 H(+). The catalysed reaction is L-glutamine + H2O = L-glutamate + NH4(+). It catalyses the reaction UTP + NH4(+) + ATP = CTP + ADP + phosphate + 2 H(+). It functions in the pathway pyrimidine metabolism; CTP biosynthesis via de novo pathway; CTP from UDP: step 2/2. With respect to regulation, allosterically activated by GTP, when glutamine is the substrate; GTP has no effect on the reaction when ammonia is the substrate. The allosteric effector GTP functions by stabilizing the protein conformation that binds the tetrahedral intermediate(s) formed during glutamine hydrolysis. Inhibited by the product CTP, via allosteric rather than competitive inhibition. In terms of biological role, catalyzes the ATP-dependent amination of UTP to CTP with either L-glutamine or ammonia as the source of nitrogen. Regulates intracellular CTP levels through interactions with the four ribonucleotide triphosphates. The sequence is that of CTP synthase from Chlorobium luteolum (strain DSM 273 / BCRC 81028 / 2530) (Pelodictyon luteolum).